Consider the following 187-residue polypeptide: NADH-quinone oxidoreductase subunit B (187 aa).

Residues Cys-51, Cys-52, Cys-117, and Cys-149 each contribute to the [4Fe-4S] cluster site.

Belongs to the complex I 20 kDa subunit family. As to quaternary structure, NDH-1 is composed of 14 different subunits. Subunits NuoB, C, D, E, F, and G constitute the peripheral sector of the complex. Requires [4Fe-4S] cluster as cofactor.

Its subcellular location is the cell inner membrane. The enzyme catalyses a quinone + NADH + 5 H(+)(in) = a quinol + NAD(+) + 4 H(+)(out). In terms of biological role, NDH-1 shuttles electrons from NADH, via FMN and iron-sulfur (Fe-S) centers, to quinones in the respiratory chain. The immediate electron acceptor for the enzyme in this species is believed to be ubiquinone. Couples the redox reaction to proton translocation (for every two electrons transferred, four hydrogen ions are translocated across the cytoplasmic membrane), and thus conserves the redox energy in a proton gradient. The polypeptide is NADH-quinone oxidoreductase subunit B (Nitratidesulfovibrio vulgaris (strain DSM 19637 / Miyazaki F) (Desulfovibrio vulgaris)).